We begin with the raw amino-acid sequence, 344 residues long: AA9 family lytic polysaccharide monooxygenase J (344 aa).

Residues 1–20 (MKSSLLVVLTAGLAVRDAIA) form the signal peptide. Cu(2+)-binding residues include His-21 and His-99. A disulfide bridge links Cys-58 with Cys-194. The O2 site is built by His-180 and Gln-189. Tyr-191 is a binding site for Cu(2+). The segment at 272 to 301 (PGGKPASGGSDGNAPEVAEPSGGEGSPSAP) is disordered. A compositionally biased stretch (low complexity) spans 285 to 301 (APEVAEPSGGEGSPSAP). A CBM1 domain is found at 304 to 341 (CEVAAYGQCGGDQYSGCTQCASGYTCKAVSPPYYSQCA).

It belongs to the polysaccharide monooxygenase AA9 family. Cu(2+) is required as a cofactor.

The protein resides in the secreted. It catalyses the reaction [(1-&gt;4)-beta-D-glucosyl]n+m + reduced acceptor + O2 = 4-dehydro-beta-D-glucosyl-[(1-&gt;4)-beta-D-glucosyl]n-1 + [(1-&gt;4)-beta-D-glucosyl]m + acceptor + H2O.. Functionally, lytic polysaccharide monooxygenase (LPMO) that depolymerizes crystalline and amorphous polysaccharides via the oxidation of scissile alpha- or beta-(1-4)-glycosidic bonds, yielding C4 oxidation products. Catalysis by LPMOs requires the reduction of the active-site copper from Cu(II) to Cu(I) by a reducing agent and H(2)O(2) or O(2) as a cosubstrate. This is AA9 family lytic polysaccharide monooxygenase J (gh61-10) from Neurospora crassa (strain ATCC 24698 / 74-OR23-1A / CBS 708.71 / DSM 1257 / FGSC 987).